The chain runs to 374 residues: SKP1-interacting partner 15 (374 aa).

Positions 3 to 48 constitute an F-box domain; that stretch reads SSPVNCLPPDSLHQIFSSLPIRDIMICRSVCKFFNQLLTSQCFIEI.

In terms of assembly, part of a SCF (ASK-cullin-F-box) protein ligase complex. Interacts with SKP1A/ASK1, SKP1B/ASK2, ASK11 and ASK13.

It localises to the nucleus. The protein operates within protein modification; protein ubiquitination. Functionally, component of SCF(ASK-cullin-F-box) E3 ubiquitin ligase complexes, which may mediate the ubiquitination and subsequent proteasomal degradation of target proteins. The protein is SKP1-interacting partner 15 (SKIP15) of Arabidopsis thaliana (Mouse-ear cress).